Consider the following 371-residue polypeptide: tRNA-specific 2-thiouridylase MnmA (371 aa).

ATP-binding positions include 8–15 and Met34; that span reads GMSGGVDS. The tract at residues 94-96 is interaction with target base in tRNA; sequence NPD. Cys99 functions as the Nucleophile in the catalytic mechanism. Cysteines 99 and 195 form a disulfide. Gly123 lines the ATP pocket. The interaction with tRNA stretch occupies residues 145–147; sequence KDQ. The Cysteine persulfide intermediate role is filled by Cys195. The interaction with tRNA stretch occupies residues 309–310; it reads RY.

Belongs to the MnmA/TRMU family.

Its subcellular location is the cytoplasm. It catalyses the reaction S-sulfanyl-L-cysteinyl-[protein] + uridine(34) in tRNA + AH2 + ATP = 2-thiouridine(34) in tRNA + L-cysteinyl-[protein] + A + AMP + diphosphate + H(+). In terms of biological role, catalyzes the 2-thiolation of uridine at the wobble position (U34) of tRNA, leading to the formation of s(2)U34. The sequence is that of tRNA-specific 2-thiouridylase MnmA from Methylococcus capsulatus (strain ATCC 33009 / NCIMB 11132 / Bath).